Here is a 226-residue protein sequence, read N- to C-terminus: MTDGTRELVIAMDGPAGAGKSTVARIVANRLGYLYIDTGAMYRALALKALRLGIPETDAAALADLADATEVELQRAPDGGNRVLLDGEDVTAEIRSPAVSAVVSQVSAVPRLRQRLIEVQRSMARAGGVVMDGRDIGSYVLPHADRKFYITASLQERARRRVAQLRAEGHEADLAAVEAEIARRDEQDMNKGVHSLVQLPESIVIDTTGKRVDEVVEEILRHCRRT.

14-22 (GPAGAGKST) serves as a coordination point for ATP.

The protein belongs to the cytidylate kinase family. Type 1 subfamily.

Its subcellular location is the cytoplasm. It carries out the reaction CMP + ATP = CDP + ADP. The catalysed reaction is dCMP + ATP = dCDP + ADP. The polypeptide is Cytidylate kinase (Symbiobacterium thermophilum (strain DSM 24528 / JCM 14929 / IAM 14863 / T)).